Consider the following 120-residue polypeptide: PYEKIGAELVKEVAKKTDDVAGDGTTTATVLAQALVREGLRNVAAGANPLGLKRGIEKAVETVSENLLKSAKEVETKEQIAATAGISAGDTTIGDLIAEAMDKVGNEGVITVEESNTFGL.

23–27 contacts ATP; that stretch reads DGTTT.

The protein belongs to the chaperonin (HSP60) family. In terms of assembly, forms a cylinder of 14 subunits composed of two heptameric rings stacked back-to-back. Interacts with the co-chaperonin GroES.

Its subcellular location is the cytoplasm. The enzyme catalyses ATP + H2O + a folded polypeptide = ADP + phosphate + an unfolded polypeptide.. In terms of biological role, together with its co-chaperonin GroES, plays an essential role in assisting protein folding. The GroEL-GroES system forms a nano-cage that allows encapsulation of the non-native substrate proteins and provides a physical environment optimized to promote and accelerate protein folding. This is Chaperonin GroEL from Mycolicibacterium chitae (Mycobacterium chitae).